We begin with the raw amino-acid sequence, 607 residues long: Guanine nucleotide-binding protein-like 1 (607 aa).

Residues 1 to 14 are compositionally biased toward basic residues; that stretch reads MPRKKPFSVKQKKK. Residues 1-81 are disordered; that stretch reads MPRKKPFSVK…GPRGYDPNRY (81 aa). Residues 15 to 26 are compositionally biased toward basic and acidic residues; sequence QLQDKRERKRGL. Ser32, Ser33, and Ser34 each carry phosphoserine. Phosphothreonine is present on residues Thr48 and Thr50. Phosphoserine occurs at positions 51 and 68. Positions 178–418 constitute a CP-type G domain; sequence WRQLWRVLEM…LCDCPGLIFP (241 aa). 225–228 provides a ligand contact to GTP; that stretch reads NKVD. The residue at position 324 (Ser324) is a Phosphoserine. GTP-binding positions include 367–374 and 411–415; these read GFPNVGKS and DCPGL. The tract at residues 544–607 is disordered; it reads GRVGPAGDEE…PYALLGEGEC (64 aa). The segment covering 550-585 has biased composition (acidic residues); the sequence is GDEEEEEEEELSSSCEEEGEEDRDADEEGEGDEDTP. Phosphoserine occurs at positions 561, 562, and 563.

Belongs to the TRAFAC class YlqF/YawG GTPase family.

Possible regulatory or functional link with the histocompatibility cluster. The sequence is that of Guanine nucleotide-binding protein-like 1 (Gnl1) from Rattus norvegicus (Rat).